The sequence spans 184 residues: Ribosome-recycling factor (184 aa).

The protein belongs to the RRF family.

Its subcellular location is the cytoplasm. Functionally, responsible for the release of ribosomes from messenger RNA at the termination of protein biosynthesis. May increase the efficiency of translation by recycling ribosomes from one round of translation to another. In Natranaerobius thermophilus (strain ATCC BAA-1301 / DSM 18059 / JW/NM-WN-LF), this protein is Ribosome-recycling factor.